The primary structure comprises 113 residues: UPF0122 protein PEPE_0845 (113 aa).

This sequence belongs to the UPF0122 family.

In terms of biological role, might take part in the signal recognition particle (SRP) pathway. This is inferred from the conservation of its genetic proximity to ftsY/ffh. May be a regulatory protein. The protein is UPF0122 protein PEPE_0845 of Pediococcus pentosaceus (strain ATCC 25745 / CCUG 21536 / LMG 10740 / 183-1w).